A 196-amino-acid polypeptide reads, in one-letter code: MRLCAGLLLLCFQGCLSLTGPGSVSGYVGGSLRVQCQYSPSYKGYMKYWCRGPHDTTCKTIVETDGSEKEKRSGPVSIRDHASNSTITVIMEDLSEDNAGSYWCKIQTSFIWDSWSRDPSVSVRVNVFPATTPTLPATTAILPLVNSGQNLRISTNVMFIFQLWSLLSSIQFQVLVFLKLPLFLSMLCAIFWVNRL.

The first 17 residues, 1 to 17 (MRLCAGLLLLCFQGCLS), serve as a signal peptide directing secretion. The Ig-like V-type domain maps to 18 to 122 (LTGPGSVSGY…DSWSRDPSVS (105 aa)). The Extracellular segment spans residues 18–171 (LTGPGSVSGY…QLWSLLSSIQ (154 aa)). An intrachain disulfide couples C36 to C104. Residue N84 is glycosylated (N-linked (GlcNAc...) asparagine). The chain crosses the membrane as a helical span at residues 172–192 (FQVLVFLKLPLFLSMLCAIFW). Over 193–196 (VNRL) the chain is Cytoplasmic.

The protein belongs to the CD300 family. As to quaternary structure, interacts with TYROBP.

The protein resides in the cell membrane. Functionally, probably acts as an activating receptor. This Mus musculus (Mouse) protein is CMRF35-like molecule 2 (Cd300e).